We begin with the raw amino-acid sequence, 690 residues long: Proprotein convertase subtilisin/kexin type 9 (690 aa).

Positions M1–A28 are cleaved as a signal peptide. Positions Q29–Q150 are excised as a propeptide. Y36 is subject to Sulfotyrosine. S45 is subject to Phosphoserine. The Inhibitor I9 domain maps to T75 to V147. In terms of domain architecture, Peptidase S8 spans P153–W459. Residues D184 and H224 each act as charge relay system in the active site. 2 cysteine pairs are disulfide-bonded: C221–C253 and C321–C356. The active-site Charge relay system is S384. The tract at residues G448–Q690 is C-terminal domain. 3 disulfide bridges follow: C455–C525, C475–C524, and C484–C507. A glycan (N-linked (GlcNAc...) asparagine) is linked at N531. Cystine bridges form between C532/C599, C550/C598, C560/C586, C606/C677, C624/C676, and C633/C652. S686 bears the Phosphoserine mark.

The protein belongs to the peptidase S8 family. Monomer. Can self-associate to form dimers and higher multimers which may have increased LDLR degrading activity. The precursor protein but not the mature protein may form multimers. Interacts with APOB, VLDLR, LRP8/APOER2 and BACE1. The full-length immature form (pro-PCSK9) interacts with SCNN1A, SCNN1B and SCNN1G. The pro-PCSK9 form (via C-terminal domain) interacts with LDLR. Interacts (via the C-terminal domain) with ANXA2 (via repeat Annexin 1); the interaction inhibits the degradation of LDLR. Ca(2+) serves as cofactor. Cleavage by furin and PCSK5 generates a truncated inactive protein that is unable to induce LDLR degradation. Post-translationally, undergoes autocatalytic cleavage in the endoplasmic reticulum to release the propeptide from the N-terminus and the cleavage of the propeptide is strictly required for its maturation and activation. The cleaved propeptide however remains associated with the catalytic domain through non-covalent interactions, preventing potential substrates from accessing its active site. As a result, it is secreted from cells as a propeptide-containing, enzymatically inactive protein. In terms of processing, phosphorylation protects the propeptide against proteolysis.

The protein localises to the cytoplasm. Its subcellular location is the secreted. The protein resides in the endosome. It localises to the lysosome. It is found in the cell surface. The protein localises to the endoplasmic reticulum. Its subcellular location is the golgi apparatus. With respect to regulation, its proteolytic activity is autoinhibited by the non-covalent binding of the propeptide to the catalytic domain. Inhibited by EGTA. Functionally, crucial player in the regulation of plasma cholesterol homeostasis. Binds to low-density lipid receptor family members: low density lipoprotein receptor (LDLR), very low density lipoprotein receptor (VLDLR), apolipoprotein E receptor (LRP1/APOER) and apolipoprotein receptor 2 (LRP8/APOER2), and promotes their degradation in intracellular acidic compartments. Acts via a non-proteolytic mechanism to enhance the degradation of the hepatic LDLR through a clathrin LDLRAP1/ARH-mediated pathway. May prevent the recycling of LDLR from endosomes to the cell surface or direct it to lysosomes for degradation. Can induce ubiquitination of LDLR leading to its subsequent degradation. Inhibits intracellular degradation of APOB via the autophagosome/lysosome pathway in a LDLR-independent manner. Involved in the disposal of non-acetylated intermediates of BACE1 in the early secretory pathway. Inhibits epithelial Na(+) channel (ENaC)-mediated Na(+) absorption by reducing ENaC surface expression primarily by increasing its proteasomal degradation. Regulates neuronal apoptosis via modulation of LRP8/APOER2 levels and related anti-apoptotic signaling pathways. The polypeptide is Proprotein convertase subtilisin/kexin type 9 (PCSK9) (Ateles geoffroyi (Black-handed spider monkey)).